Reading from the N-terminus, the 311-residue chain is MKPRKVMIIGAGNVGSAAAHAFVNQKFVEELILVDLNKERVEGNRKDLADAAAFMSGKMDISVREASDCADVDIAVITVTAGPLKEGQTRLDELRSTSRIVASIVPEMMKGGFKGIFLIATNPCDIITYQVWKLSGLPREQVLGTGVWLDTTRLRRLLAEKLDIAAQSIDAFILGEHGDSQFPVWSHSSIYGKPVNEYSMEKLGESLDLKLIGETARDTGFEIYHQKGCTEYGIAGTIVEICRHIFSGSQRALTVSCVLDGEYGQTGLAIGVPAVLSQNGVKEIISLKLNEQEQQAFDHSAAVIKENIKSI.

The NAD(+) site is built by V14, D35, and R40. Substrate is bound at residue R90. NAD(+)-binding positions include S103, 120–122 (ATN), and T145. Residue 122-125 (NPCD) coordinates substrate. Residue 150–153 (DTTR) participates in substrate binding. Residue H177 is the Proton acceptor of the active site. T230 is a substrate binding site.

The protein belongs to the LDH/MDH superfamily. LDH family. Homotetramer.

It localises to the cytoplasm. It catalyses the reaction (S)-lactate + NAD(+) = pyruvate + NADH + H(+). Its pathway is fermentation; pyruvate fermentation to lactate; (S)-lactate from pyruvate: step 1/1. Catalyzes the conversion of lactate to pyruvate. This chain is L-lactate dehydrogenase 2, found in Listeria innocua serovar 6a (strain ATCC BAA-680 / CLIP 11262).